A 524-amino-acid chain; its full sequence is Decreased expression in renal and prostate cancer protein (524 aa).

Residues 1–12 (MKEPRIFPRERP) are compositionally biased toward basic and acidic residues. Disordered regions lie at residues 1–43 (MKEP…TGHP) and 64–252 (PFPR…LDAR). The span at 129-148 (LNPRTGALPGPGPLSNPRLG) shows a compositional bias: low complexity. The span at 163–181 (GLLGAGPDPRGGGPMGPGS) shows a compositional bias: gly residues. At S302 the chain carries Phosphoserine. Residues 312–323 (PMGPNSGPSSRG) are compositionally biased toward low complexity. The tract at residues 312 to 332 (PMGPNSGPSSRGIGLPGPNPS) is disordered. Position 364 is an asymmetric dimethylarginine (R364). R387 bears the Omega-N-methylarginine mark. Position 423 is a phosphoserine (S423).

The protein belongs to the DERPC family. Ubiquitously expressed, with abundant expression in kidney, skeletal muscle, testis, liver, ovary, and heart and moderate expression in prostate. Expression is significantly reduced in renal and prostate tumors. No differential expression in breast cancer cells, between lobular carcinoma and normal lobules.

Its subcellular location is the nucleus. In terms of biological role, potential tumor suppressor. Inhibits prostate tumor cell growth, when overexpressed. The polypeptide is Decreased expression in renal and prostate cancer protein (Homo sapiens (Human)).